We begin with the raw amino-acid sequence, 84 residues long: Probable cyclin-dependent kinases regulatory subunit (84 aa).

Belongs to the CKS family. In terms of assembly, monomer in solution; may form a homohexamer that can probably bind six kinase subunits.

Its function is as follows. Binds to the catalytic subunit of the cyclin dependent kinases and is essential for their biological function. The sequence is that of Probable cyclin-dependent kinases regulatory subunit from Physarum polycephalum (Slime mold).